Reading from the N-terminus, the 563-residue chain is Inclusion body clearance protein IML2 (563 aa).

The protein belongs to the IML2 family. As to quaternary structure, interacts with lipid droplet proteins.

It localises to the cytoplasm. It is found in the nucleus. In terms of biological role, inclusion body (IB) resident protein that interacts strongly with lipid droplet (LD) proteins. Involved in LD-mediated IB clearing after protein folding stress, probably by enabling access to the IBs of an LD-stored soluble sterol derivative that acts as a chaperone in inclusion clearing. In Schizosaccharomyces pombe (strain 972 / ATCC 24843) (Fission yeast), this protein is Inclusion body clearance protein IML2.